A 122-amino-acid polypeptide reads, in one-letter code: Large ribosomal subunit protein eL34 (122 aa).

Belongs to the eukaryotic ribosomal protein eL34 family.

The polypeptide is Large ribosomal subunit protein eL34 (rpl34) (Dictyostelium discoideum (Social amoeba)).